Here is a 455-residue protein sequence, read N- to C-terminus: C4-dicarboxylate transport protein (455 aa).

8 helical membrane passes run 20-40 (HLYF…HFYP), 59-79 (MIIA…MGTL), 91-111 (GYFL…ANVI), 160-180 (GNIL…ILIG), 209-229 (PIGA…ASVV), 231-251 (LATL…VVLG), 344-364 (LLLV…AGFI), and 367-387 (AATL…ILGV).

Belongs to the dicarboxylate/amino acid:cation symporter (DAACS) (TC 2.A.23) family.

The protein localises to the cell inner membrane. Functionally, responsible for the transport of dicarboxylates such as succinate, fumarate, and malate from the periplasm across the membrane. The polypeptide is C4-dicarboxylate transport protein (Paracoccus denitrificans (strain Pd 1222)).